We begin with the raw amino-acid sequence, 505 residues long: Sodium/sialic acid symporter NanT (505 aa).

5 consecutive transmembrane segments (helical) span residues 9-29 (LNYI…VYFA), 45-65 (IPGW…ITFM), 80-100 (IGQY…IPFF), 128-148 (FMLF…LALM), and 155-175 (PLMI…LGGI). Residue alanine 56 coordinates Na(+). Threonine 58 is an N-acetyl-alpha-neuraminate binding site. Na(+) is bound at residue leucine 59. 4 residues coordinate N-acetyl-alpha-neuraminate: serine 60, threonine 63, glutamine 82, and arginine 135. Na(+) is bound at residue aspartate 182. Helical transmembrane passes span 183 to 203 (VIQG…ICFN), 227 to 247 (FSWS…FFAS), 280 to 300 (LVAC…AYYT), and 318 to 338 (FYVI…AIFA). Na(+)-binding residues include alanine 339, serine 342, serine 343, serine 345, and serine 346. Transmembrane regions (helical) follow at residues 378–398 (TLTV…IMSN), 406–426 (FNSL…LGIF), 435–455 (ALLG…ATDL), and 457–477 (FFFY…LTAP).

It belongs to the sodium:solute symporter (SSF) (TC 2.A.21) family.

It localises to the cell inner membrane. The catalysed reaction is N-acetyl-alpha-neuraminate(out) + 2 Na(+)(out) = N-acetyl-alpha-neuraminate(in) + 2 Na(+)(in). In terms of biological role, symporter that uses the Na(+) gradient as the driving force for the uptake of the sialic acid N-acetylneuraminic acid (Neu5Ac). Might play a role in persistence after colonization. This chain is Sodium/sialic acid symporter NanT, found in Aliivibrio fischeri (strain ATCC 700601 / ES114) (Vibrio fischeri).